Here is a 478-residue protein sequence, read N- to C-terminus: Transposon Ty1-H Gag polyprotein (478 aa).

Composition is skewed to polar residues over residues 1–10 (MESQQLSNYP), 48–60 (TKAN…TPAS), and 127–152 (QSQF…GNTF). Disordered stretches follow at residues 1 to 84 (MESQ…QNGP), 126 to 174 (PQSQ…PPPM), and 390 to 478 (GSRN…PETY). A compositionally biased stretch (low complexity) spans 153–165 (TDSSSADSDMTST). Residues 337–439 (NNGIHINNKV…NSKSKTARAH (103 aa)) form an RNA-binding region. Residues 440–456 (NVSTSNNSPSTDNDSIS) are compositionally biased toward low complexity. Residues 457-466 (KSTTEPIQLN) show a composition bias toward polar residues. The segment covering 467–478 (NKHDLHLRPETY) has biased composition (basic and acidic residues).

Homotrimer.

The protein localises to the cytoplasm. Functionally, capsid protein (CA) is the structural component of the virus-like particle (VLP), forming the shell that encapsulates the retrotransposons dimeric RNA genome. The particles are assembled from trimer-clustered units and there are holes in the capsid shells that allow for the diffusion of macromolecules. CA also has nucleocapsid-like chaperone activity, promoting primer tRNA(i)-Met annealing to the multipartite primer-binding site (PBS), dimerization of Ty1 RNA and initiation of reverse transcription. This Saccharomyces cerevisiae (strain ATCC 204508 / S288c) (Baker's yeast) protein is Transposon Ty1-H Gag polyprotein (TY1A-H).